The following is a 324-amino-acid chain: Glyoxylate/hydroxypyruvate reductase B (324 aa).

Active-site residues include Arg237 and Glu266. The active-site Proton donor is the His285.

The protein belongs to the D-isomer specific 2-hydroxyacid dehydrogenase family. GhrB subfamily. In terms of assembly, homodimer.

It localises to the cytoplasm. It carries out the reaction glycolate + NADP(+) = glyoxylate + NADPH + H(+). The catalysed reaction is (R)-glycerate + NAD(+) = 3-hydroxypyruvate + NADH + H(+). The enzyme catalyses (R)-glycerate + NADP(+) = 3-hydroxypyruvate + NADPH + H(+). Catalyzes the NADPH-dependent reduction of glyoxylate and hydroxypyruvate into glycolate and glycerate, respectively. The chain is Glyoxylate/hydroxypyruvate reductase B from Escherichia coli O17:K52:H18 (strain UMN026 / ExPEC).